Reading from the N-terminus, the 620-residue chain is MENENKPNVANFEAAVAAKDYEKACSELLLILSQLDSNFGGIHEIEFEYPAQLQDLEQEKIVYFCTRMATAITTLFSDPVLEISDLGVQRFLVYQRWLALIFASSPFVNADHILQTYNREPNRKNSLEIHLDSSKSSLIKFCILYLPESNVNLNLDVMWNISPELCASLCFALQSPRFVGTSTAFNKRATILQWFPRHLDQLKNLNNIPSAISHDVYMHCSYDTSVNKHDVKRALNHVIRRHIESEYGWKDRDVAHIGYRNNKPVMVVLLEHFHSAHSIYRTHSTSMIAAREHFYLIGLGSPSVDQAGQEVFDEFHLVAGDNMKQKLEFIRSVCESNGAAIFYMPSIGMDMTTIFASNTRLAPIQAIALGHPATTHSDFIEYVIVEDDYVGSEECFSETLLRLPKDALPYVPSALAPEKVDYLLRENPEVVNIGIASTTMKLNPYFLEALKAIRDRAKVKVHFHFALGQSNGITHPYVERFIKSYLGDSATAHPHSPYHQYLRILHNCDMMVNPFPFGNTNGIIDMVTLGLVGVCKTGAEVHEHIDEGLFKRLGLPEWLIANTVDEYVERAVRLAENHQERLELRRYIIENNGLNTLFTGDPRPMGQVFLEKLNAFLKEN.

It belongs to the glycosyltransferase 41 family.

Its subcellular location is the cytoplasm. The enzyme catalyses L-asparaginyl-[protein] + UDP-alpha-D-glucose = N(4)-(beta-D-glucosyl)-L-asparaginyl-[protein] + UDP + H(+). It participates in protein modification; protein glycosylation. Inverting glycosyltransferase that catalyzes the transfer of one glucose moiety from UDP-glucose to an asparagine residue in peptides and proteins containing the NX(S/T) motif, resulting in their modification with a beta-linked 1,N-glucose. Likely acts as a key component of a general protein glycosylation system. This Actinobacillus pleuropneumoniae serotype 5b (strain L20) protein is UDP-glucose:protein N-beta-glucosyltransferase.